The following is a 240-amino-acid chain: DISARM protein DrmC (240 aa).

Positions 174–201 (GYSSLHAKVIMVDEEKAFVSSANLSYNG) constitute a PLD phosphodiesterase domain. Active-site residues include His179, Lys181, and Asp186.

The protein belongs to the phospholipase D family.

The protein localises to the cytoplasm. Component of antiviral defense system DISARM (defense island system associated with restriction-modification), composed of DrmE, DrmA, DrmB, DrmC and DrmMII. DISARM is probably a multi-gene restriction module, this subunit is probably a phospholipase or nuclease. Expression of DISARM in B.subtilis (strain BEST7003) confers resistance to phages Nf, phi29, phi105, phi3T, SPO1, SPR and SPP1. Protection is over 10(7)-fold against phi3T, 10(4)-10(5)-fold against Nf, phi29, phi105 and SPR, 100-fold against SPO1 and 10-fold against SPP1. DISARM does not interfere with phage adsorption, but instead interferes with (phi3T) DNA replication early in its cycle, preventing replication, circularization and lysogeny and probably causes phage DNA degradation (DNA is degraded in SPP1-infected cells). This Bacillus paralicheniformis (strain ATCC 9945a / NCIMB 11709 / CD-2) protein is DISARM protein DrmC.